A 148-amino-acid polypeptide reads, in one-letter code: Deoxyuridine 5'-triphosphate nucleotidohydrolase (148 aa).

Substrate contacts are provided by residues 68 to 70, Asn81, 85 to 87, and Lys95; these read RSG and TVD.

The protein belongs to the dUTPase family. Mg(2+) serves as cofactor.

It carries out the reaction dUTP + H2O = dUMP + diphosphate + H(+). Its pathway is pyrimidine metabolism; dUMP biosynthesis; dUMP from dCTP (dUTP route): step 2/2. Its function is as follows. This enzyme is involved in nucleotide metabolism: it produces dUMP, the immediate precursor of thymidine nucleotides and it decreases the intracellular concentration of dUTP so that uracil cannot be incorporated into DNA. This chain is Deoxyuridine 5'-triphosphate nucleotidohydrolase, found in Caldanaerobacter subterraneus subsp. tengcongensis (strain DSM 15242 / JCM 11007 / NBRC 100824 / MB4) (Thermoanaerobacter tengcongensis).